The primary structure comprises 568 residues: Phosphomethylpyrimidine synthase (568 aa).

Residues Asn188, Met217, Tyr246, His282, 302–304 (SRG), 343–346 (DGLR), and Glu382 contribute to the substrate site. His386 is a Zn(2+) binding site. Residue Tyr409 participates in substrate binding. His450 lines the Zn(2+) pocket. [4Fe-4S] cluster contacts are provided by Cys530, Cys533, and Cys538.

Belongs to the ThiC family. As to quaternary structure, homodimer. Requires [4Fe-4S] cluster as cofactor.

It carries out the reaction 5-amino-1-(5-phospho-beta-D-ribosyl)imidazole + S-adenosyl-L-methionine = 4-amino-2-methyl-5-(phosphooxymethyl)pyrimidine + CO + 5'-deoxyadenosine + formate + L-methionine + 3 H(+). Its pathway is cofactor biosynthesis; thiamine diphosphate biosynthesis. Its function is as follows. Catalyzes the synthesis of the hydroxymethylpyrimidine phosphate (HMP-P) moiety of thiamine from aminoimidazole ribotide (AIR) in a radical S-adenosyl-L-methionine (SAM)-dependent reaction. The sequence is that of Phosphomethylpyrimidine synthase from Idiomarina loihiensis (strain ATCC BAA-735 / DSM 15497 / L2-TR).